Reading from the N-terminus, the 75-residue chain is Conotoxin VnMKLT2-012 (75 aa).

The N-terminal stretch at 1 to 23 (MMKLTCVLIIAVLFLTACQLTTA) is a signal peptide. Positions 24–45 (ETRDEYRAVRSSDEVRNSRSTR) are excised as a propeptide. Positions 31–45 (AVRSSDEVRNSRSTR) are enriched in basic and acidic residues. The interval 31 to 50 (AVRSSDEVRNSRSTRDCSGS) is disordered. 3 disulfides stabilise this stretch: Cys-47-Cys-60, Cys-54-Cys-65, and Cys-59-Cys-74.

The protein belongs to the conotoxin O1 superfamily. Expressed by the venom duct.

It localises to the secreted. In Conus ventricosus (Mediterranean cone), this protein is Conotoxin VnMKLT2-012.